Reading from the N-terminus, the 286-residue chain is Protease HtpX homolog (286 aa).

A run of 2 helical transmembrane segments spans residues 6 to 26 and 28 to 48; these read TCFL…YVGG and QGMI…YFFS. His130 provides a ligand contact to Zn(2+). Residue Glu131 is part of the active site. Position 134 (His134) interacts with Zn(2+). Transmembrane regions (helical) follow at residues 140–160 and 178–198; these read ILTG…ANFA and AIML…QMAI. Zn(2+) is bound at residue Glu203.

It belongs to the peptidase M48B family. It depends on Zn(2+) as a cofactor.

The protein localises to the cell inner membrane. The protein is Protease HtpX homolog of Campylobacter curvus (strain 525.92).